Reading from the N-terminus, the 897-residue chain is Valine--tRNA ligase (897 aa).

The 'HIGH' region signature appears at 46–56 (PNVTGSLHMGH). Residues 532–536 (KMSKT) carry the 'KMSKS' region motif. ATP is bound at residue K535. A coiled-coil region spans residues 839 to 897 (LRRSLEKLDKESGVLAARLDNASYLANAPAELVTESRAKLAEQRAQAAILAEQLARLEN).

This sequence belongs to the class-I aminoacyl-tRNA synthetase family. ValS type 1 subfamily. As to quaternary structure, monomer.

The protein localises to the cytoplasm. The enzyme catalyses tRNA(Val) + L-valine + ATP = L-valyl-tRNA(Val) + AMP + diphosphate. Its function is as follows. Catalyzes the attachment of valine to tRNA(Val). As ValRS can inadvertently accommodate and process structurally similar amino acids such as threonine, to avoid such errors, it has a 'posttransfer' editing activity that hydrolyzes mischarged Thr-tRNA(Val) in a tRNA-dependent manner. This chain is Valine--tRNA ligase, found in Gloeobacter violaceus (strain ATCC 29082 / PCC 7421).